Here is a 374-residue protein sequence, read N- to C-terminus: Phenoloxidase-activating enzyme 1 (374 aa).

The N-terminal stretch at 1-19 (MWKSLVFFVSALIWSFGSS) is a signal peptide. A propeptide spans 20–120 (QDCTTPTGSR…QCGIDTTGDR (101 aa)) (activation peptide). A Clip domain is found at 21–74 (DCTTPTGSRSNCVSLYQCQPLYNAFEQRPLPTHVVSYLGRSQCGFEGYVPRVCC). Cystine bridges form between cysteine 22/cysteine 73, cysteine 32/cysteine 63, and cysteine 38/cysteine 74. Residues 83 to 97 (ATSARPTQAPTQGSS) are compositionally biased toward polar residues. Residues 83–114 (ATSARPTQAPTQGSSDVFPEDSSPAPRNQCGI) are disordered. Residues 121-370 (VYGGTITDLD…YIDWIQNTIA (250 aa)) enclose the Peptidase S1 domain. The cysteines at positions 151 and 167 are disulfide-linked. The active-site Charge relay system is the histidine 166. Ca(2+) is bound by residues glutamate 186 and aspartate 194. The active-site Charge relay system is aspartate 228. 2 cysteine pairs are disulfide-bonded: cysteine 292–cysteine 307 and cysteine 317–cysteine 346. Residue serine 321 is the Charge relay system of the active site.

Belongs to the peptidase S1 family. CLIP subfamily. In terms of processing, activated by the removal of the N-terminal inhibitory propeptide. As to expression, expressed in hemocytes.

Its subcellular location is the secreted. Inhibited by aprotenin. Not inhibited by EDTA, PMSF or leupeptin. Functionally, serine protease which, by cleaving and activating prophenoloxidase (PPO1) after immune challenge, plays an essential role in the melanization immune response to wounding. The polypeptide is Phenoloxidase-activating enzyme 1 (Spodoptera litura (Asian cotton leafworm)).